The sequence spans 195 residues: Protein GrpE (195 aa).

Basic and acidic residues predominate over residues 1–20 (MSSKEQKTPDEQVLDQKEAA). The interval 1–40 (MSSKEQKTPDEQVLDQKEAAKGQQADAAPETADVADPRDE) is disordered.

The protein belongs to the GrpE family. Homodimer.

Its subcellular location is the cytoplasm. In terms of biological role, participates actively in the response to hyperosmotic and heat shock by preventing the aggregation of stress-denatured proteins, in association with DnaK and GrpE. It is the nucleotide exchange factor for DnaK and may function as a thermosensor. Unfolded proteins bind initially to DnaJ; upon interaction with the DnaJ-bound protein, DnaK hydrolyzes its bound ATP, resulting in the formation of a stable complex. GrpE releases ADP from DnaK; ATP binding to DnaK triggers the release of the substrate protein, thus completing the reaction cycle. Several rounds of ATP-dependent interactions between DnaJ, DnaK and GrpE are required for fully efficient folding. In Pectobacterium atrosepticum (strain SCRI 1043 / ATCC BAA-672) (Erwinia carotovora subsp. atroseptica), this protein is Protein GrpE.